Here is an 81-residue protein sequence, read N- to C-terminus: MQPLQILSIVALVVAAIIAIVVWSIVFILIRKILRQRKIDRLIDRIRERAEDSGNESEGIRKELSALVEMGHDAPGDIDDL.

The Extracellular segment spans residues 1-7; it reads MQPLQIL. The chain crosses the membrane as a helical span at residues 8-28; it reads SIVALVVAAIIAIVVWSIVFI. The Cytoplasmic segment spans residues 29–81; sequence LIRKILRQRKIDRLIDRIRERAEDSGNESEGIRKELSALVEMGHDAPGDIDDL. Phosphoserine; by host CK2 occurs at positions 53 and 57.

It belongs to the HIV-1 VPU protein family. In terms of assembly, homopentamer. Interacts with host CD4 and BRTC; these interactions induce proteasomal degradation of CD4. Interacts with host BST2; this interaction leads to the degradation of host BST2. Interacts with host FBXW11. Interacts with host AP1M1; this interaction plays a role in the mistrafficking and subsequent degradation of host BST2. Interacts with host RANBP2; this interaction allows Vpu to down-regulate host BLM sumoylation. Phosphorylated by host CK2. This phosphorylation is necessary for interaction with human BTRC and degradation of CD4.

It localises to the host membrane. Ion channel activity is inhibited by hexamethylene amiloride in vitro. In terms of biological role, enhances virion budding by targeting host CD4 and Tetherin/BST2 to proteasome degradation. Degradation of CD4 prevents any unwanted premature interactions between viral Env and its host receptor CD4 in the endoplasmic reticulum. Degradation of antiretroviral protein Tetherin/BST2 is important for virion budding, as BST2 tethers new viral particles to the host cell membrane. Mechanistically, Vpu bridges either CD4 or BST2 to BTRC, a substrate recognition subunit of the Skp1/Cullin/F-box protein E3 ubiquitin ligase, induces their ubiquitination and subsequent proteasomal degradation. The alteration of the E3 ligase specificity by Vpu seems to promote the degradation of host IKBKB, leading to NF-kappa-B down-regulation and subsequent apoptosis. Acts as a viroporin that forms an oligomeric ion channel in membranes. Modulates the host DNA repair mechanisms to promote degradation of nuclear viral cDNA in cells that are already productively infected in order to suppress immune sensing and proviral hyper-integration (superinfection). Manipulates PML-NBs and modulates SUMOylation of host BLM protein thereby enhancing its DNA-end processing activity toward viral unintegrated linear DNA. Also inhibits RAD52-mediated homologous repair of viral cDNA, preventing the generation of dead-end circular forms of single copies of the long terminal repeat and permitting sustained nucleolytic attack. In Homo sapiens (Human), this protein is Protein Vpu.